The chain runs to 99 residues: DNA-binding protein Fis (99 aa).

Residues 75–94 (QTRAANMLGINRGTLRKKLK) constitute a DNA-binding region (H-T-H motif).

It belongs to the transcriptional regulatory Fis family. As to quaternary structure, homodimer.

In terms of biological role, activates ribosomal RNA transcription. Plays a direct role in upstream activation of rRNA promoters. In Haemophilus influenzae (strain PittEE), this protein is DNA-binding protein Fis.